The primary structure comprises 161 residues: Allophycocyanin beta chain (161 aa).

Asn-71 bears the N4-methylasparagine mark. Cys-81 is a binding site for (2R,3E)-phycocyanobilin.

It belongs to the phycobiliprotein family. Heterodimer of an alpha and a beta chain. In terms of processing, contains one covalently linked phycocyanobilin chromophore.

The protein localises to the plastid. The protein resides in the chloroplast thylakoid membrane. Functionally, light-harvesting photosynthetic bile pigment-protein from the phycobiliprotein complex. Allophycocyanin has a maximum absorption at approximately 650 nanometers. The polypeptide is Allophycocyanin beta chain (apcB) (Cyanidium caldarium (Red alga)).